Consider the following 152-residue polypeptide: Xanthine-guanine phosphoribosyltransferase (152 aa).

Residues 37–38 (RG), Arg69, and 88–96 (DDLVDTGGT) contribute to the 5-phospho-alpha-D-ribose 1-diphosphate site. Arg69 lines the GMP pocket. Mg(2+) is bound at residue Asp89. 2 residues coordinate guanine: Asp92 and Ile135. Residues Asp92 and Ile135 each contribute to the xanthine site. GMP-binding positions include 92–96 (DTGGT) and 134–135 (WI).

The protein belongs to the purine/pyrimidine phosphoribosyltransferase family. XGPT subfamily. As to quaternary structure, homotetramer. It depends on Mg(2+) as a cofactor.

It localises to the cell inner membrane. The enzyme catalyses GMP + diphosphate = guanine + 5-phospho-alpha-D-ribose 1-diphosphate. The catalysed reaction is XMP + diphosphate = xanthine + 5-phospho-alpha-D-ribose 1-diphosphate. It catalyses the reaction IMP + diphosphate = hypoxanthine + 5-phospho-alpha-D-ribose 1-diphosphate. The protein operates within purine metabolism; GMP biosynthesis via salvage pathway; GMP from guanine: step 1/1. It functions in the pathway purine metabolism; XMP biosynthesis via salvage pathway; XMP from xanthine: step 1/1. Functionally, purine salvage pathway enzyme that catalyzes the transfer of the ribosyl-5-phosphate group from 5-phospho-alpha-D-ribose 1-diphosphate (PRPP) to the N9 position of the 6-oxopurines guanine and xanthine to form the corresponding ribonucleotides GMP (guanosine 5'-monophosphate) and XMP (xanthosine 5'-monophosphate), with the release of PPi. To a lesser extent, also acts on hypoxanthine. This is Xanthine-guanine phosphoribosyltransferase from Klebsiella pneumoniae (strain 342).